Reading from the N-terminus, the 287-residue chain is 4-diphosphocytidyl-2-C-methyl-D-erythritol kinase (287 aa).

Lys-14 is an active-site residue. 98–108 (PPGAGLGGGSS) lines the ATP pocket. Residue Asp-140 is part of the active site.

This sequence belongs to the GHMP kinase family. IspE subfamily.

It catalyses the reaction 4-CDP-2-C-methyl-D-erythritol + ATP = 4-CDP-2-C-methyl-D-erythritol 2-phosphate + ADP + H(+). Its pathway is isoprenoid biosynthesis; isopentenyl diphosphate biosynthesis via DXP pathway; isopentenyl diphosphate from 1-deoxy-D-xylulose 5-phosphate: step 3/6. Functionally, catalyzes the phosphorylation of the position 2 hydroxy group of 4-diphosphocytidyl-2C-methyl-D-erythritol. This Methylacidiphilum infernorum (isolate V4) (Methylokorus infernorum (strain V4)) protein is 4-diphosphocytidyl-2-C-methyl-D-erythritol kinase.